We begin with the raw amino-acid sequence, 513 residues long: Histidine ammonia-lyase (513 aa).

Positions 145 to 147 (ASG) form a cross-link, 5-imidazolinone (Ala-Gly). The residue at position 146 (Ser-146) is a 2,3-didehydroalanine (Ser).

This sequence belongs to the PAL/histidase family. Post-translationally, contains an active site 4-methylidene-imidazol-5-one (MIO), which is formed autocatalytically by cyclization and dehydration of residues Ala-Ser-Gly.

It localises to the cytoplasm. It carries out the reaction L-histidine = trans-urocanate + NH4(+). It participates in amino-acid degradation; L-histidine degradation into L-glutamate; N-formimidoyl-L-glutamate from L-histidine: step 1/3. The polypeptide is Histidine ammonia-lyase (Vibrio vulnificus (strain CMCP6)).